Here is a 303-residue protein sequence, read N- to C-terminus: Protein bottleneck (303 aa).

2 disordered regions span residues 102–142 (SKRN…PTVT) and 185–272 (VATT…ASVR). Composition is skewed to low complexity over residues 115 to 138 (RQQE…QQQE) and 185 to 197 (VATT…TANS). Residues 260-272 (ATISRQSSSASVR) are compositionally biased toward polar residues.

In terms of tissue distribution, restricted to the blastoderm.

Its subcellular location is the cytoplasm. It localises to the cytoskeleton. Functionally, acts as a regulator of the microfilament network governing cellularization of the embryo. Determines the timing of a key conformational transition in the cortical microfilament network: the proper coordination of membrane invagination and basal closure of the cells. To do this, bnk possibly physically links neighboring contractile units of the early cycle 14 microfilament network in a manner that prevents basal constriction until the proper stage has been reached. Bnk together with nullo and Sry-alpha may provide auxiliary functions, by acting both to stabilize a large and dynamic microfilament structure and regulate its functions. The protein is Protein bottleneck (bnk) of Drosophila melanogaster (Fruit fly).